Consider the following 759-residue polypeptide: Protein transport protein sec23-1 (759 aa).

4 residues coordinate Zn(2+): Cys-56, Cys-60, Cys-79, and Cys-82.

It belongs to the SEC23/SEC24 family. SEC23 subfamily. As to quaternary structure, the COPII coat is composed of at least 5 proteins: the sec23/24 complex, the sec13/31 complex, and the protein sar1.

The protein localises to the cytoplasm. The protein resides in the cytoplasmic vesicle. It localises to the COPII-coated vesicle membrane. Its subcellular location is the endoplasmic reticulum membrane. It is found in the golgi apparatus membrane. Functionally, component of the coat protein complex II (COPII) which promotes the formation of transport vesicles from the endoplasmic reticulum (ER). The coat has two main functions, the physical deformation of the endoplasmic reticulum membrane into vesicles and the selection of cargo molecules. This Schizosaccharomyces pombe (strain 972 / ATCC 24843) (Fission yeast) protein is Protein transport protein sec23-1 (sec231).